The following is a 279-amino-acid chain: Ribosomal RNA small subunit methyltransferase J (279 aa).

Residues 138-139 (ER) and aspartate 194 each bind S-adenosyl-L-methionine.

It belongs to the methyltransferase superfamily. RsmJ family.

The protein resides in the cytoplasm. It carries out the reaction guanosine(1516) in 16S rRNA + S-adenosyl-L-methionine = N(2)-methylguanosine(1516) in 16S rRNA + S-adenosyl-L-homocysteine + H(+). Its function is as follows. Specifically methylates the guanosine in position 1516 of 16S rRNA. This Acinetobacter baumannii (strain ACICU) protein is Ribosomal RNA small subunit methyltransferase J.